The primary structure comprises 187 residues: Elongation factor P (187 aa).

Belongs to the elongation factor P family.

The protein resides in the cytoplasm. It participates in protein biosynthesis; polypeptide chain elongation. Functionally, involved in peptide bond synthesis. Stimulates efficient translation and peptide-bond synthesis on native or reconstituted 70S ribosomes in vitro. Probably functions indirectly by altering the affinity of the ribosome for aminoacyl-tRNA, thus increasing their reactivity as acceptors for peptidyl transferase. The polypeptide is Elongation factor P (Bifidobacterium animalis subsp. lactis (strain AD011)).